Consider the following 206-residue polypeptide: Small ribosomal subunit protein uS4 (206 aa).

Residues 96–158 form the S4 RNA-binding domain; the sequence is GRLDNVVYRM…AKQQSRIKAA (63 aa).

It belongs to the universal ribosomal protein uS4 family. In terms of assembly, part of the 30S ribosomal subunit. Contacts protein S5. The interaction surface between S4 and S5 is involved in control of translational fidelity.

Functionally, one of the primary rRNA binding proteins, it binds directly to 16S rRNA where it nucleates assembly of the body of the 30S subunit. Its function is as follows. With S5 and S12 plays an important role in translational accuracy. The chain is Small ribosomal subunit protein uS4 from Aliivibrio fischeri (strain ATCC 700601 / ES114) (Vibrio fischeri).